Consider the following 609-residue polypeptide: Pentatricopeptide repeat-containing protein At5g13770, chloroplastic (609 aa).

The N-terminal 44 residues, 1–44 (MAIASGSWVATVNHHANPHSFTSPTKPIFFLSQKPHNFHVCSSR), are a transit peptide targeting the chloroplast. PPR repeat units follow at residues 103 to 137 (ELRT…KALP), 138 to 168 (DGQT…FRSD), 172 to 207 (AVSA…GVEP), 208 to 242 (SPGC…RLSF), 247 to 281 (SGSI…GIPE), 282 to 316 (SSEL…KLLK), 317 to 351 (DPEM…ELKV), 352 to 386 (TDCI…ECEA), 387 to 421 (GQVT…GFDK), 422 to 456 (CVVA…GCKP), 457 to 491 (NIWI…KVLP), 492 to 526 (DKVS…RGKI), and 527 to 561 (DRAM…GTRL).

It belongs to the PPR family. P subfamily.

It localises to the plastid. Its subcellular location is the chloroplast. This is Pentatricopeptide repeat-containing protein At5g13770, chloroplastic from Arabidopsis thaliana (Mouse-ear cress).